Reading from the N-terminus, the 278-residue chain is Protein D7 (278 aa).

2 consecutive CHHC U11-48K-type zinc fingers follow at residues 6-33 (LMQCPYDKNHMIRPSRFPYHLVKCRENN) and 40-67 (LATCPYNARHRVPKQELDLHMASCEYRV). The Zn(2+) site is built by Cys-9, His-15, His-25, Cys-29, Cys-43, His-49, His-59, and Cys-63. The segment covering 149–164 (QVKQNQPEPEPFTSSE) has biased composition (polar residues). Disordered stretches follow at residues 149–230 (QVKQ…PKAN) and 249–278 (PGGSSAASEPLGVDSFDEWPCLGRQPWVRK). Basic and acidic residues predominate over residues 165-175 (RNYDPRSKEPP). Residues 188-200 (ATTNTNPWCRQTG) show a composition bias toward polar residues. Basic and acidic residues predominate over residues 214–225 (SSDEGPRNKEFP).

Belongs to the UPF0224 (FAM112) family.

The protein localises to the cytoplasm. In terms of biological role, involved in oocyte maturation. It is possible that D7 is required at a certain point in the maturation process and that maturation cannot proceed beyond this point unless a threshold amount of D7 protein is provided. This chain is Protein D7 (d7), found in Xenopus laevis (African clawed frog).